The following is a 207-amino-acid chain: Vexin (207 aa).

A disordered region spans residues 55-102 (LELLPHRGDRRDPGDGRRFGRLQTARPPTAHPAKASARPVGISEPKTS). Positions 58-72 (LPHRGDRRDPGDGRR) are enriched in basic and acidic residues.

It belongs to the vexin family.

The protein resides in the cell membrane. It is found in the nucleus. Its function is as follows. Required for neurogenesis in the neural plate and retina. Strongly cooperates with neural bHLH factors to promote neurogenesis. This Pongo abelii (Sumatran orangutan) protein is Vexin.